A 118-amino-acid chain; its full sequence is MQQAPVIHEIENEYLRKDVPEFRVGDTVRVSVKVVEGTRERIQDFEGVVIRRRRMGVNENFTVRRIASHGIGVERTFLLHSPRIDGVKLVRTGKVRQANLYYLRGRTGKAARIKERRG.

This sequence belongs to the bacterial ribosomal protein bL19 family.

In terms of biological role, this protein is located at the 30S-50S ribosomal subunit interface and may play a role in the structure and function of the aminoacyl-tRNA binding site. The chain is Large ribosomal subunit protein bL19 from Herpetosiphon aurantiacus (strain ATCC 23779 / DSM 785 / 114-95).